We begin with the raw amino-acid sequence, 158 residues long: MAAKKPSAFKIAAENRKARYNYEIGETFEAGLMLTGTEVKSLRTGKATIAESYASVDREGEVFLVNATIPEYLEANRFNHAPKRPRKLLLHGREIAKLSQGVERQGMTIVPLKIYFNDRGRAKIEIALARGKQLHDKRETEKKRDWNKEKGRLLRDKH.

The interval 133 to 158 is disordered; sequence QLHDKRETEKKRDWNKEKGRLLRDKH.

This sequence belongs to the SmpB family.

It localises to the cytoplasm. Its function is as follows. Required for rescue of stalled ribosomes mediated by trans-translation. Binds to transfer-messenger RNA (tmRNA), required for stable association of tmRNA with ribosomes. tmRNA and SmpB together mimic tRNA shape, replacing the anticodon stem-loop with SmpB. tmRNA is encoded by the ssrA gene; the 2 termini fold to resemble tRNA(Ala) and it encodes a 'tag peptide', a short internal open reading frame. During trans-translation Ala-aminoacylated tmRNA acts like a tRNA, entering the A-site of stalled ribosomes, displacing the stalled mRNA. The ribosome then switches to translate the ORF on the tmRNA; the nascent peptide is terminated with the 'tag peptide' encoded by the tmRNA and targeted for degradation. The ribosome is freed to recommence translation, which seems to be the essential function of trans-translation. This Beijerinckia indica subsp. indica (strain ATCC 9039 / DSM 1715 / NCIMB 8712) protein is SsrA-binding protein.